A 238-amino-acid chain; its full sequence is Probable xyloglucan-specific endo-beta-1,4-glucanase A (238 aa).

A signal peptide spans 1–18 (MKLSLSVALSLAAATAQA). Residues Asn106 and Asn171 are each glycosylated (N-linked (GlcNAc...) asparagine).

The protein belongs to the glycosyl hydrolase 12 (cellulase H) family.

It localises to the secreted. The enzyme catalyses xyloglucan + H2O = xyloglucan oligosaccharides.. Catalyzes endohydrolysis of 1,4-beta-D-glucosidic linkages in xyloglucan with retention of the beta-configuration of the glycosyl residues. Specific for xyloglucan and does not hydrolyze other cell wall components. The polypeptide is Probable xyloglucan-specific endo-beta-1,4-glucanase A (xgeA) (Aspergillus fumigatus (strain CBS 144.89 / FGSC A1163 / CEA10) (Neosartorya fumigata)).